The primary structure comprises 315 residues: Glutaminase (315 aa).

Positions 70, 120, 166, 173, 197, 249, and 267 each coordinate substrate.

The protein belongs to the glutaminase family. In terms of assembly, homotetramer.

The enzyme catalyses L-glutamine + H2O = L-glutamate + NH4(+). This is Glutaminase from Rhizobium meliloti (strain 1021) (Ensifer meliloti).